We begin with the raw amino-acid sequence, 286 residues long: tRNA (guanine-N(7)-)-methyltransferase (286 aa).

2 positions are modified to phosphoserine: Ser-7 and Ser-59. S-adenosyl-L-methionine-binding positions include Gly-103, 126–127, 161–162, and Cys-181; these read EI and NA. Asp-184 is an active-site residue. Position 259–261 (259–261) interacts with S-adenosyl-L-methionine; sequence TEE.

The protein belongs to the class I-like SAM-binding methyltransferase superfamily. TrmB family. In terms of assembly, forms a complex with TRM82.

The protein resides in the nucleus. The enzyme catalyses guanosine(46) in tRNA + S-adenosyl-L-methionine = N(7)-methylguanosine(46) in tRNA + S-adenosyl-L-homocysteine. The protein operates within tRNA modification; N(7)-methylguanine-tRNA biosynthesis. Its function is as follows. Methyltransferase that catalyzes the formation of N(7)-methylguanine at position 46 (m7G46) in tRNA, a modification required to maintain stability of tRNAs; its absence resulting in tRNA decay. Both the D-stem and T-stem structures of tRNAs are required for efficient methyltransferase activity. The sequence is that of tRNA (guanine-N(7)-)-methyltransferase from Saccharomyces cerevisiae (strain RM11-1a) (Baker's yeast).